Here is a 244-residue protein sequence, read N- to C-terminus: tRNA (guanine-N(7)-)-methyltransferase (244 aa).

Residues 1-10 show a composition bias toward polar residues; that stretch reads MSDTPQSPAQ. A disordered region spans residues 1–20; that stretch reads MSDTPQSPAQGSLAEHDEAR. S-adenosyl-L-methionine contacts are provided by glutamate 74, glutamate 99, aspartate 126, and aspartate 149. Aspartate 149 is a catalytic residue. Residues lysine 153, aspartate 185, and 222-225 contribute to the substrate site; that span reads TKFE.

This sequence belongs to the class I-like SAM-binding methyltransferase superfamily. TrmB family.

The catalysed reaction is guanosine(46) in tRNA + S-adenosyl-L-methionine = N(7)-methylguanosine(46) in tRNA + S-adenosyl-L-homocysteine. Its pathway is tRNA modification; N(7)-methylguanine-tRNA biosynthesis. Its function is as follows. Catalyzes the formation of N(7)-methylguanine at position 46 (m7G46) in tRNA. The protein is tRNA (guanine-N(7)-)-methyltransferase of Pseudomonas aeruginosa (strain UCBPP-PA14).